Here is a 303-residue protein sequence, read N- to C-terminus: Probable endonuclease 4 (303 aa).

Residues H78, H118, E154, D188, H191, H222, D235, H237, and E267 each coordinate Zn(2+).

Belongs to the AP endonuclease 2 family. It depends on Zn(2+) as a cofactor.

It catalyses the reaction Endonucleolytic cleavage to 5'-phosphooligonucleotide end-products.. Functionally, endonuclease IV plays a role in DNA repair. It cleaves phosphodiester bonds at apurinic or apyrimidinic (AP) sites, generating a 3'-hydroxyl group and a 5'-terminal sugar phosphate. In Mycoplasmoides gallisepticum (strain R(low / passage 15 / clone 2)) (Mycoplasma gallisepticum), this protein is Probable endonuclease 4.